The primary structure comprises 213 residues: Orotate phosphoribosyltransferase (213 aa).

Lys-26 contacts 5-phospho-alpha-D-ribose 1-diphosphate. Residue 34–35 participates in orotate binding; sequence FF. 5-phospho-alpha-D-ribose 1-diphosphate is bound by residues 72–73, Arg-99, Lys-100, Lys-103, His-105, and 124–132; these read YK and DDVITAGTA. Orotate contacts are provided by Thr-128 and Arg-156.

It belongs to the purine/pyrimidine phosphoribosyltransferase family. PyrE subfamily. Homodimer. Mg(2+) is required as a cofactor.

It catalyses the reaction orotidine 5'-phosphate + diphosphate = orotate + 5-phospho-alpha-D-ribose 1-diphosphate. The protein operates within pyrimidine metabolism; UMP biosynthesis via de novo pathway; UMP from orotate: step 1/2. Its function is as follows. Catalyzes the transfer of a ribosyl phosphate group from 5-phosphoribose 1-diphosphate to orotate, leading to the formation of orotidine monophosphate (OMP). This is Orotate phosphoribosyltransferase from Vibrio cholerae serotype O1 (strain ATCC 39315 / El Tor Inaba N16961).